Consider the following 281-residue polypeptide: Peptidyl-prolyl cis-trans isomerase CYP28, chloroplastic (281 aa).

Residues 1–24 (MASSSILIPPILTRRNLLLSTTIA) constitute a chloroplast transit peptide. The region spanning 66 to 268 (STTPCSDSTP…KTVFISGCGE (203 aa)) is the PPIase cyclophilin-type domain.

The protein belongs to the cyclophilin-type PPIase family. Post-translationally, S-nytrosylated during the hypersensitive disease resistance response. Ubiquitous. Not detected in roots.

The protein resides in the plastid. The protein localises to the chloroplast. It catalyses the reaction [protein]-peptidylproline (omega=180) = [protein]-peptidylproline (omega=0). Functionally, PPIases accelerate the folding of proteins. It catalyzes the cis-trans isomerization of proline imidic peptide bonds in oligopeptides. This is Peptidyl-prolyl cis-trans isomerase CYP28, chloroplastic (CYP28) from Arabidopsis thaliana (Mouse-ear cress).